Here is a 129-residue protein sequence, read N- to C-terminus: L-ectoine synthase (129 aa).

It belongs to the ectoine synthase family.

The enzyme catalyses (2S)-4-acetamido-2-aminobutanoate = L-ectoine + H2O. The protein operates within amine and polyamine biosynthesis; ectoine biosynthesis; L-ectoine from L-aspartate 4-semialdehyde: step 3/3. Functionally, catalyzes the circularization of gamma-N-acetyl-alpha,gamma-diaminobutyric acid (ADABA) to ectoine (1,4,5,6-tetrahydro-2-methyl-4-pyrimidine carboxylic acid), which is an excellent osmoprotectant. The sequence is that of L-ectoine synthase from Mycobacterium sp. (strain KMS).